The primary structure comprises 241 residues: MVNNRQTLDLKLFPASPGELVDWQLSDTPVPYPEAVAAMEARAAAIASGEASELVWLLEHPPLYTSGTSGRETDLLQARFPLFSTGRGGQVTYHGPGQRVAYVMLDLKRRRPDVRAFVAGLEEWIIRTLDTFDIKGERREDRVGVWVARPDKGPGHEDKIAAIGVRLRRWVSFHGISLNVDPDLSHFDAIVPCGITDARYGVTSLADLGLRVRLSDVDAALRRAFGEVFGPSELRLPETTA.

A BPL/LPL catalytic domain is found at G49–E233. Substrate contacts are provided by residues R87 to H94, A162 to G164, and G175 to S177. C193 functions as the Acyl-thioester intermediate in the catalytic mechanism.

It belongs to the LipB family.

It is found in the cytoplasm. The enzyme catalyses octanoyl-[ACP] + L-lysyl-[protein] = N(6)-octanoyl-L-lysyl-[protein] + holo-[ACP] + H(+). The protein operates within protein modification; protein lipoylation via endogenous pathway; protein N(6)-(lipoyl)lysine from octanoyl-[acyl-carrier-protein]: step 1/2. Its function is as follows. Catalyzes the transfer of endogenously produced octanoic acid from octanoyl-acyl-carrier-protein onto the lipoyl domains of lipoate-dependent enzymes. Lipoyl-ACP can also act as a substrate although octanoyl-ACP is likely to be the physiological substrate. In Nitrobacter hamburgensis (strain DSM 10229 / NCIMB 13809 / X14), this protein is Octanoyltransferase.